The following is an 83-amino-acid chain: Mu-theraphotoxin-Hhn2i (83 aa).

Residues 1-21 (MKASMFLALAGLVLLFVVGYA) form the signal peptide. A propeptide spanning residues 22-48 (SESEEKEFPRELLSKIFAVDDFKGEER) is cleaved from the precursor. 3 disulfides stabilise this stretch: Cys-50/Cys-65, Cys-57/Cys-70, and Cys-64/Cys-77. Leu-81 carries the post-translational modification Leucine amide.

The protein belongs to the neurotoxin 10 (Hwtx-1) family. 15 (Hntx-3) subfamily. Monomer. As to expression, expressed by the venom gland.

The protein resides in the secreted. Its function is as follows. Lethal neurotoxin. Selectively blocks tetrodotoxin-sensitive voltage-gated sodium channels (Nav). Does not affect tetrodotoxin-resistant voltage-gated sodium channels or calcium channels. This chain is Mu-theraphotoxin-Hhn2i, found in Cyriopagopus hainanus (Chinese bird spider).